The primary structure comprises 521 residues: Biotinidase (521 aa).

The N-terminal stretch at 1–25 is a signal peptide; sequence MSGARTAHALVFLLGCSALALGVCS. A CN hydrolase domain is found at 50 to 329; that stretch reads NPLELSSRQQ…QGLVGTENTT (280 aa). The active-site Proton acceptor is the Glu90. N-linked (GlcNAc...) asparagine glycosylation is found at Asn128 and Asn181. Catalysis depends on Lys190, which acts as the Proton donor. Cys223 serves as the catalytic Nucleophile. N-linked (GlcNAc...) asparagine glycosylation is present at Asn380.

This sequence belongs to the carbon-nitrogen hydrolase superfamily. BTD/VNN family.

Its subcellular location is the secreted. It is found in the extracellular space. It carries out the reaction biocytin + H2O = biotin + L-lysine. It catalyses the reaction biotin amide + H2O = biotin + NH4(+). Its function is as follows. Catalytic release of biotin from biocytin, the product of biotin-dependent carboxylases degradation. This is Biotinidase from Rattus norvegicus (Rat).